The chain runs to 411 residues: Metal-binding regulatory protein cuf1 (411 aa).

Positions 1–40 form a DNA-binding region, copper-fist; it reads MVVINNVKMACMKCIRGHRSSTCKHNDRELFPIRPKGRPI. Zn(2+) contacts are provided by Cys11, Cys14, Cys23, and His25. A disordered region spans residues 63–92; sequence SRKKGSKCSTSSTTDLDSSSASNSSCSIPS. A compositionally biased stretch (low complexity) spans 69-92; that stretch reads KCSTSSTTDLDSSSASNSSCSIPS.

The protein localises to the cytoplasm. It localises to the nucleus. Its function is as follows. Copper-sensing transcription factor that regulates iron uptake genes. Under copper starvation conditions activates the transcription of the copper transport genes, ctr4, ctr5 and ctr6. The chain is Metal-binding regulatory protein cuf1 (cuf1) from Schizosaccharomyces pombe (strain 972 / ATCC 24843) (Fission yeast).